The primary structure comprises 298 residues: tRNA-uridine aminocarboxypropyltransferase 2 (298 aa).

An N-acetylmethionine modification is found at Met-1. The disordered stretch occupies residues 1 to 52 (MESQKEARILQEPVARPPGASRSQTPNAKERQEGGPVPAAAALGAEADDDSA). Residue Ser-132 is modified to Phosphoserine. Residues 178-181 (DGTW) carry the DXTW motif.

It belongs to the TDD superfamily. DTWD2 family.

Its subcellular location is the nucleus. It is found in the cytoplasm. The catalysed reaction is a uridine in tRNA + S-adenosyl-L-methionine = a 3-[(3S)-3-amino-3-carboxypropyl]uridine in tRNA + S-methyl-5'-thioadenosine + H(+). Catalyzes the formation of 3-(3-amino-3-carboxypropyl)uridine (acp3U) at position 20a in the D-loop of several cytoplasmic tRNAs (acp3U(20a)). Also has a weak activity to form acp3U at position 20 in the D-loop of tRNAs (acp3U(20)). Involved in glycoRNA biosynthesis by mediating formation of acp3U, which acts as an attachment site for N-glycans on tRNAs. GlycoRNAs consist of RNAs modified with secretory N-glycans that are presented on the cell surface. This Macaca fascicularis (Crab-eating macaque) protein is tRNA-uridine aminocarboxypropyltransferase 2.